Consider the following 484-residue polypeptide: BAHD acyltransferase DCR (484 aa).

The Proton acceptor role is filled by His168. Positions 211 to 233 are disordered; the sequence is LDLTAPKDPNETSNGEDAANPTV. The Proton acceptor role is filled by Asp394. Residues 452–484 are disordered; it reads EEEEDDGKKLTNGNGHVNGNGNGYVNGNGNGFV. The span at 467–484 shows a compositional bias: gly residues; that stretch reads HVNGNGNGYVNGNGNGFV.

It belongs to the plant acyltransferase family. As to expression, expressed in root caps and lateral root emerging sites, in trichomes, in epidermis in stems, sepals and anther filaments, and in pollen grains and torpedo stage seeds.

The protein localises to the cytoplasm. Its subcellular location is the cytosol. Its function is as follows. Required for incorporation of 9(10),16-dihydroxy-hexadecanoic acid into cutin. The chain is BAHD acyltransferase DCR (DCR) from Arabidopsis thaliana (Mouse-ear cress).